A 1203-amino-acid polypeptide reads, in one-letter code: Exonuclease/helicase subunit RexA (1203 aa).

One can recognise a UvrD-like helicase ATP-binding domain in the interval 4–472 (VKLTPEQNEA…IRLKENFRSR (469 aa)). 25–32 (ASAGSGKT) serves as a coordination point for ATP. A UvrD-like helicase C-terminal domain is found at 503–785 (VQGNISDYPV…RVMTFHKSKG (283 aa)).

Belongs to the helicase family. AddA subfamily. As to quaternary structure, heterodimer of RexA (AddA) and RexB. Mg(2+) serves as cofactor.

The catalysed reaction is Couples ATP hydrolysis with the unwinding of duplex DNA by translocating in the 3'-5' direction.. It catalyses the reaction ATP + H2O = ADP + phosphate + H(+). Its function is as follows. The heterodimer acts both as an ATP-dependent DNA helicase and an ATP-dependent, dual-direction single-stranded exonuclease. Recognizes the L.lactis chi site (5'-GCGCGTG-3'), which stimulates homologous recombination. The RexA (AddA) nuclease domain is required for chi fragment generation; this subunit has 3'-&gt;5' exonuclease activity and probably also performs the helicase function. This chain is Exonuclease/helicase subunit RexA, found in Lactococcus lactis subsp. cremoris (strain MG1363).